The chain runs to 297 residues: MQKSKSIFIPKAFAPQQQAQAPPSKLDNKDPSVEGEGASKPKDDEYLSENVLSHINSTIEKLVKPYEIFPSEDIRPDLFALVTALEAKMEDCIRRNGDTITGPLRLLTQPAANFDVTNKEYVDWIYSIVNTRLDSKWDRNADIDMNHFKIKNIQTPQELHDAATKAYVDEKVELINNLHTIPTHHLWSKATLVGKKTWFFHPGFICPQTLHLSAIGFSTSPNKYKIGEKTKFGELNPTRLYVVVNQEIRSEHVVEKDVQIGYILKRFETPIVLEEGCNFRLMTESCLPDASVNVSFY.

The disordered stretch occupies residues 1–44 (MQKSKSIFIPKAFAPQQQAQAPPSKLDNKDPSVEGEGASKPKDD). Positions 10 to 23 (PKAFAPQQQAQAPP) are enriched in low complexity. Residues 26–44 (LDNKDPSVEGEGASKPKDD) show a composition bias toward basic and acidic residues.

This is an uncharacterized protein from Invertebrate iridescent virus 3 (IIV-3).